A 361-amino-acid chain; its full sequence is G2/mitotic-specific cyclin-B (361 aa).

The protein belongs to the cyclin family. Cyclin AB subfamily.

Essential for the control of the cell cycle at the G2/M (mitosis) transition. Interacts with the CDC2 protein kinase to form MPF. G2/M cyclins accumulate steadily during G2 and are abruptly destroyed at mitosis. The sequence is that of G2/mitotic-specific cyclin-B from Hydra vulgaris (Hydra).